A 360-amino-acid chain; its full sequence is Glutamate 5-kinase (360 aa).

An ATP-binding site is contributed by K11. The substrate site is built by S51, D138, and N150. A PUA domain is found at 278-356; the sequence is KGEIHINECA…GKKPVVHYDY (79 aa).

This sequence belongs to the glutamate 5-kinase family.

The protein resides in the cytoplasm. The catalysed reaction is L-glutamate + ATP = L-glutamyl 5-phosphate + ADP. It participates in amino-acid biosynthesis; L-proline biosynthesis; L-glutamate 5-semialdehyde from L-glutamate: step 1/2. Its function is as follows. Catalyzes the transfer of a phosphate group to glutamate to form L-glutamate 5-phosphate. The sequence is that of Glutamate 5-kinase from Bacteroides thetaiotaomicron (strain ATCC 29148 / DSM 2079 / JCM 5827 / CCUG 10774 / NCTC 10582 / VPI-5482 / E50).